The primary structure comprises 234 residues: Adenosine 5'-phosphosulfate reductase (234 aa).

[4Fe-4S] cluster-binding residues include C120, C121, C203, and C206. C229 (nucleophile; cysteine thiosulfonate intermediate) is an active-site residue.

It belongs to the PAPS reductase family. CysH subfamily. [4Fe-4S] cluster serves as cofactor.

It localises to the cytoplasm. It carries out the reaction [thioredoxin]-disulfide + sulfite + AMP + 2 H(+) = adenosine 5'-phosphosulfate + [thioredoxin]-dithiol. It functions in the pathway sulfur metabolism; hydrogen sulfide biosynthesis; sulfite from sulfate. Its function is as follows. Catalyzes the formation of sulfite from adenosine 5'-phosphosulfate (APS) using thioredoxin as an electron donor. This chain is Adenosine 5'-phosphosulfate reductase, found in Bacillus cereus (strain ZK / E33L).